Reading from the N-terminus, the 492-residue chain is Catalase-3 (492 aa).

Catalysis depends on residues H65 and N138. Y348 contacts heme.

Belongs to the catalase family. Homotetramer. It depends on heme as a cofactor.

The protein resides in the peroxisome. The protein localises to the glyoxysome. It catalyses the reaction 2 H2O2 = O2 + 2 H2O. Functionally, occurs in almost all aerobically respiring organisms and serves to protect cells from the toxic effects of hydrogen peroxide. This is Catalase-3 (CAT3) from Glycine max (Soybean).